A 491-amino-acid polypeptide reads, in one-letter code: Putative F-box/LRR-repeat protein At3g59230 (491 aa).

Positions 11 to 57 (KDIINSLPEALIYHILSFLSTKEAAITSLLSRKWRYFFAFVPNLDFD) constitute an F-box domain. LRR repeat units lie at residues 127–154 (LSIA…RIEA), 156–182 (NGLA…YLDS), 184–209 (ELDY…VMID), 325–351 (ASTV…TIES), 352–377 (NTKV…VFQG), 419–444 (NDKT…NIYY), and 472–491 (VQVI…SSSI).

This is Putative F-box/LRR-repeat protein At3g59230 from Arabidopsis thaliana (Mouse-ear cress).